Consider the following 91-residue polypeptide: Probable Fe(2+)-trafficking protein (91 aa).

Belongs to the Fe(2+)-trafficking protein family. Monomer.

Could be a mediator in iron transactions between iron acquisition and iron-requiring processes, such as synthesis and/or repair of Fe-S clusters in biosynthetic enzymes. The polypeptide is Probable Fe(2+)-trafficking protein (Escherichia coli O6:H1 (strain CFT073 / ATCC 700928 / UPEC)).